The following is a 346-amino-acid chain: tRNA N6-adenosine threonylcarbamoyltransferase (346 aa).

Positions 111 and 115 each coordinate Fe cation. Residues 134-138 (LVSGG), D167, G180, and N277 contribute to the substrate site. D305 provides a ligand contact to Fe cation.

This sequence belongs to the KAE1 / TsaD family. It depends on Fe(2+) as a cofactor.

The protein localises to the cytoplasm. It catalyses the reaction L-threonylcarbamoyladenylate + adenosine(37) in tRNA = N(6)-L-threonylcarbamoyladenosine(37) in tRNA + AMP + H(+). Functionally, required for the formation of a threonylcarbamoyl group on adenosine at position 37 (t(6)A37) in tRNAs that read codons beginning with adenine. Is involved in the transfer of the threonylcarbamoyl moiety of threonylcarbamoyl-AMP (TC-AMP) to the N6 group of A37, together with TsaE and TsaB. TsaD likely plays a direct catalytic role in this reaction. The polypeptide is tRNA N6-adenosine threonylcarbamoyltransferase (Bordetella parapertussis (strain 12822 / ATCC BAA-587 / NCTC 13253)).